A 413-amino-acid polypeptide reads, in one-letter code: Arginine biosynthesis bifunctional protein ArgJ (413 aa).

Positions 160, 186, 197, 277, 408, and 413 each coordinate substrate. Threonine 197 (nucleophile) is an active-site residue.

It belongs to the ArgJ family. In terms of assembly, heterotetramer of two alpha and two beta chains.

The protein resides in the cytoplasm. It catalyses the reaction N(2)-acetyl-L-ornithine + L-glutamate = N-acetyl-L-glutamate + L-ornithine. The catalysed reaction is L-glutamate + acetyl-CoA = N-acetyl-L-glutamate + CoA + H(+). Its pathway is amino-acid biosynthesis; L-arginine biosynthesis; L-ornithine and N-acetyl-L-glutamate from L-glutamate and N(2)-acetyl-L-ornithine (cyclic): step 1/1. It participates in amino-acid biosynthesis; L-arginine biosynthesis; N(2)-acetyl-L-ornithine from L-glutamate: step 1/4. In terms of biological role, catalyzes two activities which are involved in the cyclic version of arginine biosynthesis: the synthesis of N-acetylglutamate from glutamate and acetyl-CoA as the acetyl donor, and of ornithine by transacetylation between N(2)-acetylornithine and glutamate. In Prochlorococcus marinus (strain SARG / CCMP1375 / SS120), this protein is Arginine biosynthesis bifunctional protein ArgJ.